A 173-amino-acid polypeptide reads, in one-letter code: Photosystem I assembly protein Ycf3 (173 aa).

TPR repeat units follow at residues 35-68 (AYIY…EENA), 72-105 (GETL…NPKQ), and 120-153 (GRAL…YPGG).

Belongs to the Ycf3 family.

It localises to the cellular thylakoid membrane. Functionally, essential for the assembly of the photosystem I (PSI) complex. May act as a chaperone-like factor to guide the assembly of the PSI subunits. The sequence is that of Photosystem I assembly protein Ycf3 from Prochlorococcus marinus (strain SARG / CCMP1375 / SS120).